A 111-amino-acid polypeptide reads, in one-letter code: Nucleoid-associated protein TTE0040 (111 aa).

It belongs to the YbaB/EbfC family. Homodimer.

The protein localises to the cytoplasm. The protein resides in the nucleoid. In terms of biological role, binds to DNA and alters its conformation. May be involved in regulation of gene expression, nucleoid organization and DNA protection. The sequence is that of Nucleoid-associated protein TTE0040 from Caldanaerobacter subterraneus subsp. tengcongensis (strain DSM 15242 / JCM 11007 / NBRC 100824 / MB4) (Thermoanaerobacter tengcongensis).